Consider the following 272-residue polypeptide: tRNA uridine(34) hydroxylase (272 aa).

A Rhodanese domain is found at 121-217; sequence SRSDVYTIDT…YFKSTGNINN (97 aa). Residue C177 is the Cysteine persulfide intermediate of the active site.

This sequence belongs to the TrhO family.

The catalysed reaction is uridine(34) in tRNA + AH2 + O2 = 5-hydroxyuridine(34) in tRNA + A + H2O. Functionally, catalyzes oxygen-dependent 5-hydroxyuridine (ho5U) modification at position 34 in tRNAs. The protein is tRNA uridine(34) hydroxylase of Ehrlichia ruminantium (strain Welgevonden).